The following is a 223-amino-acid chain: Twisted gastrulation protein homolog 1 (223 aa).

A signal peptide spans 1 to 25 (MKLHYVAVLTLAILMFLTWLPASLS). Asn-52 and Asn-81 each carry an N-linked (GlcNAc...) asparagine glycan.

The protein belongs to the twisted gastrulation protein family. In terms of assembly, interacts with CHRD and BMP4. This interaction enhances CHRD/BMP4 complex formation. Interacts with BMP7.

It is found in the secreted. Its function is as follows. May be involved in dorsoventral axis formation. Seems to antagonize BMP signaling by forming ternary complexes with CHRD and BMPs, thereby preventing BMPs from binding to their receptors. In addition to the anti-BMP function, also has pro-BMP activity, partly mediated by cleavage and degradation of CHRD, which releases BMPs from ternary complexes. May be an important modulator of BMP-regulated cartilage development and chondrocyte differentiation. May play a role in thymocyte development. The polypeptide is Twisted gastrulation protein homolog 1 (TWSG1) (Pongo abelii (Sumatran orangutan)).